Reading from the N-terminus, the 577-residue chain is Arginine--tRNA ligase (577 aa).

A 'HIGH' region motif is present at residues 122–132 (PNVAKEMHVGH).

The protein belongs to the class-I aminoacyl-tRNA synthetase family. Monomer.

The protein localises to the cytoplasm. The catalysed reaction is tRNA(Arg) + L-arginine + ATP = L-arginyl-tRNA(Arg) + AMP + diphosphate. The chain is Arginine--tRNA ligase from Salmonella dublin (strain CT_02021853).